Reading from the N-terminus, the 360-residue chain is Holliday junction branch migration complex subunit RuvB (360 aa).

The disordered stretch occupies residues 1 to 23; that stretch reads MIASVGDSRYYPKSVANGEKSDQ. A large ATPase domain (RuvB-L) region spans residues 12–204; it reads PKSVANGEKS…FGIVLRLEFY (193 aa). ATP contacts are provided by residues L43, R44, G85, K88, T89, T90, 151–153, R194, Y204, and R241; that span reads EDY. T89 is a binding site for Mg(2+). The small ATPAse domain (RuvB-S) stretch occupies residues 205-275; the sequence is TTEDLKIILK…TAQKALEMLE (71 aa). The interval 278–360 is head domain (RuvB-H); sequence QHGFDEVDRR…KPPKKQDSLF (83 aa). Residues R333 and R338 each coordinate DNA.

It belongs to the RuvB family. Homohexamer. Forms an RuvA(8)-RuvB(12)-Holliday junction (HJ) complex. HJ DNA is sandwiched between 2 RuvA tetramers; dsDNA enters through RuvA and exits via RuvB. An RuvB hexamer assembles on each DNA strand where it exits the tetramer. Each RuvB hexamer is contacted by two RuvA subunits (via domain III) on 2 adjacent RuvB subunits; this complex drives branch migration. In the full resolvosome a probable DNA-RuvA(4)-RuvB(12)-RuvC(2) complex forms which resolves the HJ.

It is found in the cytoplasm. The catalysed reaction is ATP + H2O = ADP + phosphate + H(+). The RuvA-RuvB-RuvC complex processes Holliday junction (HJ) DNA during genetic recombination and DNA repair, while the RuvA-RuvB complex plays an important role in the rescue of blocked DNA replication forks via replication fork reversal (RFR). RuvA specifically binds to HJ cruciform DNA, conferring on it an open structure. The RuvB hexamer acts as an ATP-dependent pump, pulling dsDNA into and through the RuvAB complex. RuvB forms 2 homohexamers on either side of HJ DNA bound by 1 or 2 RuvA tetramers; 4 subunits per hexamer contact DNA at a time. Coordinated motions by a converter formed by DNA-disengaged RuvB subunits stimulates ATP hydrolysis and nucleotide exchange. Immobilization of the converter enables RuvB to convert the ATP-contained energy into a lever motion, pulling 2 nucleotides of DNA out of the RuvA tetramer per ATP hydrolyzed, thus driving DNA branch migration. The RuvB motors rotate together with the DNA substrate, which together with the progressing nucleotide cycle form the mechanistic basis for DNA recombination by continuous HJ branch migration. Branch migration allows RuvC to scan DNA until it finds its consensus sequence, where it cleaves and resolves cruciform DNA. The polypeptide is Holliday junction branch migration complex subunit RuvB (Koribacter versatilis (strain Ellin345)).